The sequence spans 442 residues: UDP-N-acetylmuramoylalanine--D-glutamate ligase (442 aa).

113 to 119 (GSNGKTT) lines the ATP pocket.

This sequence belongs to the MurCDEF family.

The protein resides in the cytoplasm. The catalysed reaction is UDP-N-acetyl-alpha-D-muramoyl-L-alanine + D-glutamate + ATP = UDP-N-acetyl-alpha-D-muramoyl-L-alanyl-D-glutamate + ADP + phosphate + H(+). It functions in the pathway cell wall biogenesis; peptidoglycan biosynthesis. Functionally, cell wall formation. Catalyzes the addition of glutamate to the nucleotide precursor UDP-N-acetylmuramoyl-L-alanine (UMA). The polypeptide is UDP-N-acetylmuramoylalanine--D-glutamate ligase (Coxiella burnetii (strain CbuG_Q212) (Coxiella burnetii (strain Q212))).